The primary structure comprises 145 residues: 3-hydroxyacyl-[acyl-carrier-protein] dehydratase FabZ (145 aa).

Residue histidine 47 is part of the active site.

Belongs to the thioester dehydratase family. FabZ subfamily.

The protein localises to the cytoplasm. The enzyme catalyses a (3R)-hydroxyacyl-[ACP] = a (2E)-enoyl-[ACP] + H2O. In terms of biological role, involved in unsaturated fatty acids biosynthesis. Catalyzes the dehydration of short chain beta-hydroxyacyl-ACPs and long chain saturated and unsaturated beta-hydroxyacyl-ACPs. The polypeptide is 3-hydroxyacyl-[acyl-carrier-protein] dehydratase FabZ (Aromatoleum aromaticum (strain DSM 19018 / LMG 30748 / EbN1) (Azoarcus sp. (strain EbN1))).